The following is a 307-amino-acid chain: Homoserine O-acetyltransferase (307 aa).

Cys142 (acyl-thioester intermediate) is an active-site residue. Residues Lys163 and Ser192 each contribute to the substrate site. Residue His235 is the Proton acceptor of the active site. The active site involves Glu237. Arg249 provides a ligand contact to substrate.

This sequence belongs to the MetA family.

Its subcellular location is the cytoplasm. The catalysed reaction is L-homoserine + acetyl-CoA = O-acetyl-L-homoserine + CoA. The protein operates within amino-acid biosynthesis; L-methionine biosynthesis via de novo pathway; O-acetyl-L-homoserine from L-homoserine: step 1/1. Functionally, transfers an acetyl group from acetyl-CoA to L-homoserine, forming acetyl-L-homoserine. This chain is Homoserine O-acetyltransferase, found in Sinorhizobium fredii (strain NBRC 101917 / NGR234).